A 302-amino-acid chain; its full sequence is Spermidine synthase (302 aa).

Position 1 is an N-acetylmethionine (M1). A PABS domain is found at 18-253 (EGWFRETCSL…GQIGFMLCSK (236 aa)). Q49 contributes to the S-adenosyl 3-(methylsulfanyl)propylamine binding site. Y79 serves as a coordination point for putrescine. Residues Q80, D104, E124, 155-156 (DG), and D173 contribute to the S-adenosyl 3-(methylsulfanyl)propylamine site. D173 acts as the Proton acceptor in catalysis. Putrescine is bound by residues 173–176 (DSSD) and Y241.

The protein belongs to the spermidine/spermine synthase family. As to quaternary structure, homodimer or homotetramer.

It carries out the reaction S-adenosyl 3-(methylsulfanyl)propylamine + putrescine = S-methyl-5'-thioadenosine + spermidine + H(+). It functions in the pathway amine and polyamine biosynthesis; spermidine biosynthesis; spermidine from putrescine: step 1/1. With respect to regulation, the activity is thought to be regulated mainly by the availability of decarboxylated S-adenosylmethionine. Its function is as follows. Catalyzes the production of spermidine from putrescine and decarboxylated S-adenosylmethionine (dcSAM). Has a strong preference for putrescine as substrate, and has very low activity towards 1,3-diaminopropane. Has extremely low activity towards spermidine. The protein is Spermidine synthase (Srm) of Mus musculus (Mouse).